A 138-amino-acid polypeptide reads, in one-letter code: DNA-directed RNA polymerase subunit omega (138 aa).

The disordered stretch occupies residues Gly104–Ser138. Polar residues predominate over residues Phe126–Ser138.

Belongs to the RNA polymerase subunit omega family. As to quaternary structure, the RNAP catalytic core consists of 2 alpha, 1 beta, 1 beta' and 1 omega subunit. When a sigma factor is associated with the core the holoenzyme is formed, which can initiate transcription.

It carries out the reaction RNA(n) + a ribonucleoside 5'-triphosphate = RNA(n+1) + diphosphate. Functionally, promotes RNA polymerase assembly. Latches the N- and C-terminal regions of the beta' subunit thereby facilitating its interaction with the beta and alpha subunits. This Ehrlichia chaffeensis (strain ATCC CRL-10679 / Arkansas) protein is DNA-directed RNA polymerase subunit omega.